The chain runs to 177 residues: MIVAVASRNPNKLRAVQAAYKLFGMRAQVVPVEKPVSLPPQPIGVETVVAGAIERARAALSVVQNAEHGVGIEAGVLQAGGRYLDVTVAAIADRNGVVTIGFGPAFQVPDIFLNDVLRGVELGVLAERYFGRVAIGYKEGIIGVLTKGVVSRFDLNMAAVVMALVPRLSTNAPLYRF.

It belongs to the YjjX NTPase family. As to quaternary structure, homodimer. Mg(2+) serves as cofactor. Requires Mn(2+) as cofactor.

It carries out the reaction XTP + H2O = XDP + phosphate + H(+). The enzyme catalyses ITP + H2O = IDP + phosphate + H(+). Its function is as follows. Phosphatase that hydrolyzes non-canonical purine nucleotides such as XTP and ITP to their respective diphosphate derivatives. Probably excludes non-canonical purines from DNA/RNA precursor pool, thus preventing their incorporation into DNA/RNA and avoiding chromosomal lesions. The protein is Probable inosine/xanthosine triphosphatase of Pyrobaculum islandicum (strain DSM 4184 / JCM 9189 / GEO3).